A 125-amino-acid polypeptide reads, in one-letter code: Prefoldin subunit beta (125 aa).

It belongs to the prefoldin subunit beta family. As to quaternary structure, heterohexamer of two alpha and four beta subunits.

It localises to the cytoplasm. Functionally, molecular chaperone capable of stabilizing a range of proteins. Seems to fulfill an ATP-independent, HSP70-like function in archaeal de novo protein folding. This Halobacterium salinarum (strain ATCC 29341 / DSM 671 / R1) protein is Prefoldin subunit beta.